The following is a 139-amino-acid chain: Large ribosomal subunit protein uL13c (139 aa).

The protein belongs to the universal ribosomal protein uL13 family. Part of the 50S ribosomal subunit.

The protein resides in the plastid. It is found in the chloroplast. The sequence is that of Large ribosomal subunit protein uL13c from Trieres chinensis (Marine centric diatom).